Here is a 168-residue protein sequence, read N- to C-terminus: Protein C2-DOMAIN ABA-RELATED 1 (168 aa).

Met1 is modified (N-acetylmethionine). The C2 domain occupies 1 to 104; that stretch reads MENLVGLLRI…EAIKFAHQLG (104 aa). Ca(2+) is bound by residues Arg21, Asp22, Asp27, Asp73, Tyr74, Asp75, and Asp81.

Belongs to the plant CAR protein family. In terms of assembly, dimers and oligomers. Binds to PYR/PYL/RCAR abscisic acid intracellular receptors in an ABA-independent manner, both at the plasma membrane and in the nucleus. Interacts directly with PYR1, PYL1, PYL4, PYL6 and PYL8. Binds phospholipids in a Ca(2+)-dependent manner. It depends on Ca(2+) as a cofactor. Expressed in roots.

The protein resides in the cell membrane. It localises to the nucleus. Stimulates the GTPase/ATPase activities of Obg-like ATPases. Mediates the transient calcium-dependent interaction of PYR/PYL/RCAR abscisic acid (ABA) receptors with the plasma membrane and thus regulates ABA sensitivity. Binds liposomes in the absence of exogenous Ca(2+), but this activity is enhanced in the presence of Ca(2+) and generates membrane curvature. The polypeptide is Protein C2-DOMAIN ABA-RELATED 1 (Arabidopsis thaliana (Mouse-ear cress)).